A 582-amino-acid polypeptide reads, in one-letter code: Actin-histidine N-methyltransferase (582 aa).

S-adenosyl-L-methionine contacts are provided by residues Arg75, 104–106, Arg254, 275–279, and 325–327; these read EGF, DMCNH, and NGF. The SET domain maps to 94–314; sequence DGFELVEFPE…SGEQIYIFYG (221 aa). The disordered stretch occupies residues 550 to 582; that stretch reads DKDLLPNGTKSENDSFLAEDNQQETGNAKDFCS.

Belongs to the class V-like SAM-binding methyltransferase superfamily. SETD3 actin-histidine methyltransferase family.

Its subcellular location is the cytoplasm. The enzyme catalyses L-histidyl-[protein] + S-adenosyl-L-methionine = N(tele)-methyl-L-histidyl-[protein] + S-adenosyl-L-homocysteine + H(+). In terms of biological role, protein-histidine N-methyltransferase that specifically mediates 3-methylhistidine (tele-methylhistidine) methylation of actin at 'His-73'. Does not have protein-lysine N-methyltransferase activity and probably only catalyzes histidine methylation of actin. This Xenopus tropicalis (Western clawed frog) protein is Actin-histidine N-methyltransferase.